A 260-amino-acid polypeptide reads, in one-letter code: Putative ABC transporter ATP-binding protein SCO3161 (260 aa).

The 231-residue stretch at 16-246 (LDVSGLAFAY…DDLMRAHRLE (231 aa)) folds into the ABC transporter domain. Residue 49-56 (GPNGAGKT) participates in ATP binding.

This sequence belongs to the ABC transporter superfamily.

The protein resides in the cell membrane. Functionally, probably part of an ABC transporter complex. Responsible for energy coupling to the transport system. This Streptomyces coelicolor (strain ATCC BAA-471 / A3(2) / M145) protein is Putative ABC transporter ATP-binding protein SCO3161.